The primary structure comprises 139 residues: Insulin-like growth factor (139 aa).

The first 38 residues, 1–38 (YIRRVRQGSIYSLLVESQQWCKLTLTLLLLLALLTRCT), serve as a signal peptide directing secretion. The tract at residues 39–67 (LSETLCGSELVDTLQFVCDDRGFFFVPQH) is b. A c region spans residues 68 to 82 (VPPRRGAHRRSRARK). Residues 83 to 103 (GIVEECCFKGCSLRLLEMYCA) are a. A d region spans residues 104–113 (RPSKAERDVA). Residues 108 to 139 (AERDVARPRQRPHRASQHSRRGSQSRGRGRSR) form a disordered region. Residues 114–139 (RPRQRPHRASQHSRRGSQSRGRGRSR) are e. A compositionally biased stretch (basic residues) spans 115-139 (PRQRPHRASQHSRRGSQSRGRGRSR).

Belongs to the insulin family.

The protein localises to the secreted. Functionally, the insulin-like growth factors, isolated from plasma, are structurally and functionally related to insulin but have a much higher growth-promoting activity. The chain is Insulin-like growth factor from Myxine glutinosa (Atlantic hagfish).